The following is a 508-amino-acid chain: Photosystem II CP47 reaction center protein (508 aa).

6 consecutive transmembrane segments (helical) span residues 21–36, 101–115, 140–156, 203–218, 237–252, and 457–472; these read AVHL…WAGS, IVLS…IWHW, GIHL…FGAF, IAAG…FHLC, VLSS…AFVV, and CFAL…HGAR.

Belongs to the PsbB/PsbC family. PsbB subfamily. In terms of assembly, PSII is composed of 1 copy each of membrane proteins PsbA, PsbB, PsbC, PsbD, PsbE, PsbF, PsbH, PsbI, PsbJ, PsbK, PsbL, PsbM, PsbT, PsbX, PsbY, PsbZ, Psb30/Ycf12, at least 3 peripheral proteins of the oxygen-evolving complex and a large number of cofactors. It forms dimeric complexes. The cofactor is Binds multiple chlorophylls. PSII binds additional chlorophylls, carotenoids and specific lipids..

It localises to the plastid. It is found in the chloroplast thylakoid membrane. In terms of biological role, one of the components of the core complex of photosystem II (PSII). It binds chlorophyll and helps catalyze the primary light-induced photochemical processes of PSII. PSII is a light-driven water:plastoquinone oxidoreductase, using light energy to abstract electrons from H(2)O, generating O(2) and a proton gradient subsequently used for ATP formation. This is Photosystem II CP47 reaction center protein from Chlorella vulgaris (Green alga).